Here is a 490-residue protein sequence, read N- to C-terminus: Betaine aldehyde dehydrogenase (490 aa).

T26 and D93 together coordinate K(+). 150–152 (GAW) is a binding site for NAD(+). The active-site Charge relay system is the K162. 176-179 (KPSE) is an NAD(+) binding site. K(+) is bound at residue V180. NAD(+) is bound at residue 230–233 (GVAT). A K(+)-binding site is contributed by L246. The active-site Proton acceptor is E252. Residues G254, C286, and E387 each contribute to the NAD(+) site. Residue C286 is the Nucleophile of the active site. Position 286 is a cysteine sulfenic acid (-SOH) (C286). Residues K457 and G460 each coordinate K(+). E464 functions as the Charge relay system in the catalytic mechanism.

This sequence belongs to the aldehyde dehydrogenase family. Dimer of dimers. The cofactor is K(+).

It catalyses the reaction betaine aldehyde + NAD(+) + H2O = glycine betaine + NADH + 2 H(+). It functions in the pathway amine and polyamine biosynthesis; betaine biosynthesis via choline pathway; betaine from betaine aldehyde: step 1/1. In terms of biological role, involved in the biosynthesis of the osmoprotectant glycine betaine. Catalyzes the irreversible oxidation of betaine aldehyde to the corresponding acid. This is Betaine aldehyde dehydrogenase from Stenotrophomonas maltophilia (strain R551-3).